The chain runs to 256 residues: Imidazole glycerol phosphate synthase subunit HisF (256 aa).

Active-site residues include Asp-12 and Asp-131.

This sequence belongs to the HisA/HisF family. In terms of assembly, heterodimer of HisH and HisF.

Its subcellular location is the cytoplasm. It catalyses the reaction 5-[(5-phospho-1-deoxy-D-ribulos-1-ylimino)methylamino]-1-(5-phospho-beta-D-ribosyl)imidazole-4-carboxamide + L-glutamine = D-erythro-1-(imidazol-4-yl)glycerol 3-phosphate + 5-amino-1-(5-phospho-beta-D-ribosyl)imidazole-4-carboxamide + L-glutamate + H(+). The protein operates within amino-acid biosynthesis; L-histidine biosynthesis; L-histidine from 5-phospho-alpha-D-ribose 1-diphosphate: step 5/9. Its function is as follows. IGPS catalyzes the conversion of PRFAR and glutamine to IGP, AICAR and glutamate. The HisF subunit catalyzes the cyclization activity that produces IGP and AICAR from PRFAR using the ammonia provided by the HisH subunit. The polypeptide is Imidazole glycerol phosphate synthase subunit HisF (Renibacterium salmoninarum (strain ATCC 33209 / DSM 20767 / JCM 11484 / NBRC 15589 / NCIMB 2235)).